We begin with the raw amino-acid sequence, 348 residues long: Phosphoribosylformylglycinamidine cyclo-ligase (348 aa).

It belongs to the AIR synthase family.

Its subcellular location is the cytoplasm. It catalyses the reaction 2-formamido-N(1)-(5-O-phospho-beta-D-ribosyl)acetamidine + ATP = 5-amino-1-(5-phospho-beta-D-ribosyl)imidazole + ADP + phosphate + H(+). It participates in purine metabolism; IMP biosynthesis via de novo pathway; 5-amino-1-(5-phospho-D-ribosyl)imidazole from N(2)-formyl-N(1)-(5-phospho-D-ribosyl)glycinamide: step 2/2. The chain is Phosphoribosylformylglycinamidine cyclo-ligase from Ruegeria pomeroyi (strain ATCC 700808 / DSM 15171 / DSS-3) (Silicibacter pomeroyi).